The chain runs to 662 residues: Acetyl-coenzyme A synthetase (662 aa).

CoA is bound by residues 197-200 (RKGK) and Thr-317. ATP contacts are provided by residues 393–395 (GEP), 417–422 (DTWWQT), Asp-510, and Arg-525. Ser-533 is a CoA binding site. An ATP-binding site is contributed by Arg-536. Mg(2+) contacts are provided by His-549 and Val-552. N6-acetyllysine is present on Lys-623.

This sequence belongs to the ATP-dependent AMP-binding enzyme family. Mg(2+) is required as a cofactor. Post-translationally, acetylated. Deacetylation by the SIR2-homolog deacetylase activates the enzyme.

The enzyme catalyses acetate + ATP + CoA = acetyl-CoA + AMP + diphosphate. Its function is as follows. Catalyzes the conversion of acetate into acetyl-CoA (AcCoA), an essential intermediate at the junction of anabolic and catabolic pathways. AcsA undergoes a two-step reaction. In the first half reaction, AcsA combines acetate with ATP to form acetyl-adenylate (AcAMP) intermediate. In the second half reaction, it can then transfer the acetyl group from AcAMP to the sulfhydryl group of CoA, forming the product AcCoA. This Helicobacter acinonychis (strain Sheeba) protein is Acetyl-coenzyme A synthetase.